The sequence spans 456 residues: Zinc finger protein 25 (456 aa).

The KRAB domain maps to 8-79 (VTLKDVIVEF…EVEFPHRGFP (72 aa)). 12 consecutive C2H2-type zinc fingers follow at residues 118 to 140 (CECKECGKFFCQKSALIVHQHTH), 146 to 168 (YDCDKCGKSFSKNEDLIRHQKIH), 174 to 196 (YECKECKKIFYHLSSLSRHLRTH), 202 to 224 (YECNQCEKSFYQKPHLTEHQKTH), 230 to 252 (FECTECGKFFYVKAYLMVHQKTH), 258 to 280 (YECKECGKAFSQKSHLTVHQRMH), 286 to 308 (YKCKECGKFFSRNSHLKTHQRSH), 314 to 336 (YECKECRKCFYQKSALTVHQRTH), 342 to 364 (FECNKCGKTFYYKSDLTKHQRKH), 370 to 392 (YECTECGKSFAVNSVLRLHQRTH), 398 to 420 (YACKECGKSFSQKSHFIIHQRKH), and 426 to 448 (YECQECGETFIQKSQLTAHQKTH).

This sequence belongs to the krueppel C2H2-type zinc-finger protein family.

The protein localises to the nucleus. Its function is as follows. May be involved in transcriptional regulation. The polypeptide is Zinc finger protein 25 (ZNF25) (Homo sapiens (Human)).